The chain runs to 714 residues: Interferon-induced GTP-binding protein Mx2 (714 aa).

Positions 1–89 (MSMSYRALKF…QRSKGSENNL (89 aa)) are disordered. Polar residues-rich tracts occupy residues 61–70 (NNFNQLNLDP) and 79–88 (QQRSKGSENN). One can recognise a Dynamin-type G domain in the interval 115-386 (DLALPAIAVI…LIWHINKSLP (272 aa)). The interval 125 to 132 (GDQSSGKS) is G1 motif. Position 125-132 (125-132 (GDQSSGKS)) interacts with GTP. Residues 150-152 (ITR) are G2 motif. The G3 motif stretch occupies residues 224–227 (DLPG). Residues 224 to 228 (DLPGI) and 293 to 296 (TKPD) contribute to the GTP site. The G4 motif stretch occupies residues 293 to 296 (TKPD). The segment at 325–328 (KCRG) is G5 motif. Positions 622–713 (IVEIGVHLNA…ALYEFPHFKS (92 aa)) constitute a GED domain.

It belongs to the TRAFAC class dynamin-like GTPase superfamily. Dynamin/Fzo/YdjA family.

The protein localises to the cytoplasm. The protein resides in the nucleus. Functionally, interferon-induced dynamin-like GTPase with antiviral activity. This chain is Interferon-induced GTP-binding protein Mx2 (MX2), found in Ovis aries (Sheep).